The primary structure comprises 328 residues: Phenylalanine--tRNA ligase alpha subunit (328 aa).

Residue glutamate 253 coordinates Mg(2+).

It belongs to the class-II aminoacyl-tRNA synthetase family. Phe-tRNA synthetase alpha subunit type 1 subfamily. Tetramer of two alpha and two beta subunits. It depends on Mg(2+) as a cofactor.

Its subcellular location is the cytoplasm. It carries out the reaction tRNA(Phe) + L-phenylalanine + ATP = L-phenylalanyl-tRNA(Phe) + AMP + diphosphate + H(+). This is Phenylalanine--tRNA ligase alpha subunit from Actinobacillus pleuropneumoniae serotype 7 (strain AP76).